The following is a 701-amino-acid chain: Polyribonucleotide nucleotidyltransferase (701 aa).

The Mg(2+) site is built by Asp487 and Asp493. The KH domain occupies 554 to 613 (PTMIAMKIDTDKIRDVIGKGGATIRAICEETKASIDIEDDGSIKIFGETKEAAEAARQRV). The S1 motif domain occupies 623-691 (GKIYVGKVER…NRGRIKLSIK (69 aa)).

This sequence belongs to the polyribonucleotide nucleotidyltransferase family. As to quaternary structure, component of the RNA degradosome, which is a multiprotein complex involved in RNA processing and mRNA degradation. It depends on Mg(2+) as a cofactor.

The protein resides in the cytoplasm. The catalysed reaction is RNA(n+1) + phosphate = RNA(n) + a ribonucleoside 5'-diphosphate. Its function is as follows. Involved in mRNA degradation. Catalyzes the phosphorolysis of single-stranded polyribonucleotides processively in the 3'- to 5'-direction. This is Polyribonucleotide nucleotidyltransferase from Pseudomonas putida (strain W619).